The sequence spans 235 residues: UPF0758 protein Swol_1642 (235 aa).

One can recognise an MPN domain in the interval 109–235 (IIKSPEDVQE…YCSLKARGLI (127 aa)). Residues H184, H186, and D197 each coordinate Zn(2+). A JAMM motif motif is present at residues 184 to 197 (HNHPSGDPTPSQED).

The protein belongs to the UPF0758 family.

In Syntrophomonas wolfei subsp. wolfei (strain DSM 2245B / Goettingen), this protein is UPF0758 protein Swol_1642.